Here is a 296-residue protein sequence, read N- to C-terminus: MTLFKGSGVALVTPFKDGKVNFKKLEEILNWHVECGTDAIIVCGTTGEASTMTEEERKETIKFTVDTINKRIPVIAGTGSNNTEAAIKMSKWAESIGVDGVLVITPYYNKTTQKGIFEHFKAINDSINIPIVLYNVPSRTGLNITPKTLLKLCDLNNVVAIKEASGNFSQLVEMKALCRDKIDLYSGNDDQVVPLLSLGGIGVISVAANIYPKEMHDICDLYMNGKTHEALKIQLDMLDVINSLFIETNPIPIKTAMNLKGMDVGALRLPLCDMEENNLEVLKNALENYNKTSREA.

Threonine 46 provides a ligand contact to pyruvate. The active-site Proton donor/acceptor is tyrosine 134. Lysine 162 acts as the Schiff-base intermediate with substrate in catalysis. Residue isoleucine 204 participates in pyruvate binding.

This sequence belongs to the DapA family. As to quaternary structure, homotetramer; dimer of dimers.

The protein resides in the cytoplasm. It carries out the reaction L-aspartate 4-semialdehyde + pyruvate = (2S,4S)-4-hydroxy-2,3,4,5-tetrahydrodipicolinate + H2O + H(+). It functions in the pathway amino-acid biosynthesis; L-lysine biosynthesis via DAP pathway; (S)-tetrahydrodipicolinate from L-aspartate: step 3/4. Functionally, catalyzes the condensation of (S)-aspartate-beta-semialdehyde [(S)-ASA] and pyruvate to 4-hydroxy-tetrahydrodipicolinate (HTPA). This Clostridium novyi (strain NT) protein is 4-hydroxy-tetrahydrodipicolinate synthase.